The chain runs to 602 residues: MQSKGTIISIQFLLRFLLLWVLIGKSHTEEDIIITTKNGKVRGMNLPVLDGTVTAFLGIPYAQPPLGRLRFKKPQFLTKWSDIWNATKYANSCYQNADQSFPGFPGSEMWNPNTDLSEDCLYLNVWIPTPKPKNATVMIWIYGGGFQTGTSSLPVYDGKFLARVERVIVVSMNYRVGALGFLALPGNPEVPGNMGLFDQQLALQWVQKNIAAFGGNPKSVTLFGESAGAGSVSLHLLSPRSQPLFTRAILQSGSSNAPWAVMSLDEAKNRTLTLAKFIGCSKENDTEIIKCLRNKDPQEILLNELLVVPSDTLLSVNFGPVVDGDFLTDMPDTLLQLGQFKKTQILVGVNKDEGTAFLVYGAPGFSKDNDSIITRKEFQEGLKIYFPGVSEFGREAILFYYVDLLDDQRAEKYREALDDVLGDYNIICPALEFTTKFSELGNNAFFYYFEHRSSQLPWPEWMGVMHGYEIEFVFGLPLERRVNYTRAEEILSRSIMNYWANFAKYGNPNGTQNNSTRWPAFRSTDQKYLTLNAESPKVYTKLRAQQCRFWTLFFPKVLEMTGNIDEAEREWRAGFYRWNNYMMDWKNQFNDYTSKKESCAGL.

A signal peptide spans 1–28 (MQSKGTIISIQFLLRFLLLWVLIGKSHT). The N-linked (GlcNAc...) asparagine glycan is linked to asparagine 85. An intrachain disulfide couples cysteine 93 to cysteine 120. The N-linked (GlcNAc...) asparagine glycan is linked to asparagine 134. 144-145 (GG) serves as a coordination point for substrate. Serine 226 functions as the Acyl-ester intermediate in the catalytic mechanism. Serine 226 carries the post-translational modification Phosphoserine. Asparagine 269 and asparagine 284 each carry an N-linked (GlcNAc...) asparagine glycan. Cysteines 280 and 291 form a disulfide. Glutamate 353 acts as the Charge relay system in catalysis. Asparagine 369 is a glycosylation site (N-linked (GlcNAc...) asparagine). An intrachain disulfide couples cysteine 428 to cysteine 547. Histidine 466 (charge relay system) is an active-site residue. 4 N-linked (GlcNAc...) asparagine glycosylation sites follow: asparagine 483, asparagine 509, asparagine 513, and asparagine 514.

Belongs to the type-B carboxylesterase/lipase family. As to quaternary structure, homotetramer; disulfide-linked. Dimer of dimers.

The protein localises to the secreted. The catalysed reaction is an acylcholine + H2O = a carboxylate + choline + H(+). In terms of biological role, esterase with broad substrate specificity. Contributes to the inactivation of the neurotransmitter acetylcholine. Can degrade neurotoxic organophosphate esters. This chain is Cholinesterase (BCHE), found in Felis catus (Cat).